Consider the following 356-residue polypeptide: Nicotinate-nucleotide--dimethylbenzimidazole phosphoribosyltransferase (356 aa).

The Proton acceptor role is filled by Glu317.

It belongs to the CobT family. In terms of assembly, homodimer.

The catalysed reaction is 5,6-dimethylbenzimidazole + nicotinate beta-D-ribonucleotide = alpha-ribazole 5'-phosphate + nicotinate + H(+). It functions in the pathway nucleoside biosynthesis; alpha-ribazole biosynthesis; alpha-ribazole from 5,6-dimethylbenzimidazole: step 1/2. Catalyzes the synthesis of alpha-ribazole-5'-phosphate from nicotinate mononucleotide (NAMN) and 5,6-dimethylbenzimidazole (DMB). The polypeptide is Nicotinate-nucleotide--dimethylbenzimidazole phosphoribosyltransferase (Salmonella typhi).